The sequence spans 193 residues: Ion-translocating oxidoreductase complex subunit A (193 aa).

The next 6 helical transmembrane spans lie at 5–25, 47–67, 72–92, 102–122, 134–154, and 171–191; these read LLLFVGTVLVNNFVLVKFLGL, FVMTLASICAWLIDTWILIPL, LRTLAFILVIAVVVQFTEMVV, LLGIFLPLITTNCAVLGVALL, ALYGFSAAVGFSLVMVLFAAI, and AIALITAGLMSLAFMGFSGLV.

Belongs to the NqrDE/RnfAE family. The complex is composed of six subunits: RnfA, RnfB, RnfC, RnfD, RnfE and RnfG.

It is found in the cell inner membrane. Functionally, part of a membrane-bound complex that couples electron transfer with translocation of ions across the membrane. This chain is Ion-translocating oxidoreductase complex subunit A, found in Citrobacter koseri (strain ATCC BAA-895 / CDC 4225-83 / SGSC4696).